A 339-amino-acid chain; its full sequence is Ketol-acid reductoisomerase (NADP(+)) (339 aa).

One can recognise a KARI N-terminal Rossmann domain in the interval 1-182 (MRVYYDRDAD…GGGRAGIIET (182 aa)). Residues 24 to 27 (YGSQ), Arg48, Ser51, Ser53, and 83 to 86 (DELQ) each bind NADP(+). His108 is an active-site residue. NADP(+) is bound at residue Gly134. In terms of domain architecture, KARI C-terminal knotted spans 183-328 (TFKEECETDL…ERLRGMMPWI (146 aa)). Positions 191, 195, 227, and 231 each coordinate Mg(2+). Ser252 contacts substrate.

Belongs to the ketol-acid reductoisomerase family. Mg(2+) serves as cofactor.

The catalysed reaction is (2R)-2,3-dihydroxy-3-methylbutanoate + NADP(+) = (2S)-2-acetolactate + NADPH + H(+). It catalyses the reaction (2R,3R)-2,3-dihydroxy-3-methylpentanoate + NADP(+) = (S)-2-ethyl-2-hydroxy-3-oxobutanoate + NADPH + H(+). The protein operates within amino-acid biosynthesis; L-isoleucine biosynthesis; L-isoleucine from 2-oxobutanoate: step 2/4. It functions in the pathway amino-acid biosynthesis; L-valine biosynthesis; L-valine from pyruvate: step 2/4. In terms of biological role, involved in the biosynthesis of branched-chain amino acids (BCAA). Catalyzes an alkyl-migration followed by a ketol-acid reduction of (S)-2-acetolactate (S2AL) to yield (R)-2,3-dihydroxy-isovalerate. In the isomerase reaction, S2AL is rearranged via a Mg-dependent methyl migration to produce 3-hydroxy-3-methyl-2-ketobutyrate (HMKB). In the reductase reaction, this 2-ketoacid undergoes a metal-dependent reduction by NADPH to yield (R)-2,3-dihydroxy-isovalerate. In Methylobacterium sp. (strain 4-46), this protein is Ketol-acid reductoisomerase (NADP(+)).